Consider the following 180-residue polypeptide: GTP cyclohydrolase 1 (180 aa).

Zn(2+)-binding residues include C71, H74, and C142.

This sequence belongs to the GTP cyclohydrolase I family. As to quaternary structure, homomer.

The catalysed reaction is GTP + H2O = 7,8-dihydroneopterin 3'-triphosphate + formate + H(+). The protein operates within cofactor biosynthesis; 7,8-dihydroneopterin triphosphate biosynthesis; 7,8-dihydroneopterin triphosphate from GTP: step 1/1. This is GTP cyclohydrolase 1 from Helicobacter pylori (strain Shi470).